The following is a 480-amino-acid chain: Mannose-1-phosphate guanylyltransferase ManC (480 aa).

Belongs to the mannose-6-phosphate isomerase type 2 family.

It carries out the reaction alpha-D-mannose 1-phosphate + GTP + H(+) = GDP-alpha-D-mannose + diphosphate. It participates in nucleotide-sugar biosynthesis; GDP-alpha-D-mannose biosynthesis; GDP-alpha-D-mannose from alpha-D-mannose 1-phosphate (GTP route): step 1/1. Its function is as follows. Involved in the biosynthesis of the capsular polysaccharide colanic acid. In Salmonella typhimurium (strain LT2 / SGSC1412 / ATCC 700720), this protein is Mannose-1-phosphate guanylyltransferase ManC (manC).